The following is a 325-amino-acid chain: MSETATWQPSAPIPNLLKRAAVMAEIRRFFTDRGVLEVETPCMSQATVTDIHLFPFETRFVGPGHSQGLNLYLMTSPEYHMKRLLAAGCGPVFQLCRSFRNEEMGRHHNPEFTMLEWYRPCYDMYRLINEVDDLLQQVLECQPAESLSYQQAFQRHLDIDPLSADKTQLREVAAKLDLSNIADTEEDRDTLLQLLFTMGVEPHIGKDRPTFIYHFPATQASLAQISPEDHRVAERFEVYYKGIELANGFHELTDAREQRLRFEQDNRKRAARGLPQQPIDNNLLAALEAGLPDCSGVALGVDRVVMLALGAESIGEVIAFTVDRA.

76 to 78 (SPE) contributes to the substrate binding site. Residues 100-102 (RNE) and asparagine 109 contribute to the ATP site. Tyrosine 118 serves as a coordination point for substrate. 244–245 (EL) contributes to the ATP binding site. Position 251 (glutamate 251) interacts with substrate. Glycine 300 lines the ATP pocket.

This sequence belongs to the class-II aminoacyl-tRNA synthetase family. EpmA subfamily. In terms of assembly, homodimer.

The enzyme catalyses D-beta-lysine + L-lysyl-[protein] + ATP = N(6)-((3R)-3,6-diaminohexanoyl)-L-lysyl-[protein] + AMP + diphosphate + H(+). With EpmB is involved in the beta-lysylation step of the post-translational modification of translation elongation factor P (EF-P). Catalyzes the ATP-dependent activation of (R)-beta-lysine produced by EpmB, forming a lysyl-adenylate, from which the beta-lysyl moiety is then transferred to the epsilon-amino group of a conserved specific lysine residue in EF-P. The protein is Elongation factor P--(R)-beta-lysine ligase of Klebsiella pneumoniae (strain 342).